The following is a 185-amino-acid chain: NADH-ubiquinone oxidoreductase chain 6 (185 aa).

Transmembrane regions (helical) follow at residues 4–24, 33–53, 54–74, 94–114, and 159–179; these read LTYY…IFII, ILYM…IGLG, IFSL…FLFI, LPLV…IYSN, and AFIL…PISI.

It belongs to the complex I subunit 6 family. In terms of assembly, complex I is composed of 37 different subunits.

It localises to the mitochondrion membrane. The catalysed reaction is a ubiquinone + NADH + 5 H(+)(in) = a ubiquinol + NAD(+) + 4 H(+)(out). Its function is as follows. Core subunit of the mitochondrial membrane respiratory chain NADH dehydrogenase (Complex I) that is believed to belong to the minimal assembly required for catalysis. Complex I functions in the transfer of electrons from NADH to the respiratory chain. The immediate electron acceptor for the enzyme is believed to be ubiquinone. The polypeptide is NADH-ubiquinone oxidoreductase chain 6 (ND6) (Yarrowia lipolytica (strain CLIB 122 / E 150) (Yeast)).